The following is a 187-amino-acid chain: UPF0398 protein LJ_1195 (187 aa).

The protein belongs to the UPF0398 family.

This chain is UPF0398 protein LJ_1195, found in Lactobacillus johnsonii (strain CNCM I-12250 / La1 / NCC 533).